Consider the following 158-residue polypeptide: Snaclec coagulation factor X-activating enzyme light chain 2 (158 aa).

The N-terminal stretch at Met-1–Ala-23 is a signal peptide. Cystine bridges form between Cys-27–Cys-38, Cys-55–Cys-152, and Cys-127–Cys-144. Positions Tyr-34–Lys-153 constitute a C-type lectin domain.

The protein belongs to the snaclec family. As to quaternary structure, heterotrimer; disulfide-linked. The heterotrimer consists of 1 heavy chain (a metalloproteinase) and 2 light chains: LC1 and LC2. In terms of tissue distribution, expressed by the venom gland.

The protein resides in the secreted. Functionally, regulatory subunit of the blood coagulation factor X-activating enzyme. Activates coagulation factor X (F10) by cleaving the Arg-Ile bond at position 234, activates coagulation factor IX (F9) by cleaving the Arg-Val bond at position 226 and is also able to activate protein C (PROC). May serve as an exosite by which the enzyme recognizes and binds to the Gla domain of factor X (F10) in a calcium-dependent manner. In Macrovipera lebetinus (Levantine viper), this protein is Snaclec coagulation factor X-activating enzyme light chain 2 (LC2).